Consider the following 528-residue polypeptide: GMP synthase [glutamine-hydrolyzing] (528 aa).

Residues 3–199 enclose the Glutamine amidotransferase type-1 domain; sequence KVAIIDFGSQ…FLDIAGCQKD (197 aa). Residue Cys-83 is the Nucleophile of the active site. Catalysis depends on residues His-174 and Glu-176. The GMPS ATP-PPase domain occupies 200 to 394; sequence WTVTSFIDDQ…LGISTEILMR (195 aa). 227 to 233 is a binding site for ATP; the sequence is SGGVDSS.

In terms of assembly, homodimer.

It catalyses the reaction XMP + L-glutamine + ATP + H2O = GMP + L-glutamate + AMP + diphosphate + 2 H(+). It participates in purine metabolism; GMP biosynthesis; GMP from XMP (L-Gln route): step 1/1. In terms of biological role, catalyzes the synthesis of GMP from XMP. This chain is GMP synthase [glutamine-hydrolyzing], found in Ehrlichia ruminantium (strain Welgevonden).